We begin with the raw amino-acid sequence, 352 residues long: Glutamine synthetase cytosolic isozyme (352 aa).

Positions 19–98 (FIAEYIWIDA…VMCDTYTPAG (80 aa)) constitute a GS beta-grasp domain. Residues 105 to 352 (KRCNAAKIFS…TSMIAETTIL (248 aa)) form the GS catalytic domain.

It belongs to the glutamine synthetase family. Homooctamer.

Its subcellular location is the cytoplasm. It catalyses the reaction L-glutamate + NH4(+) + ATP = L-glutamine + ADP + phosphate + H(+). The polypeptide is Glutamine synthetase cytosolic isozyme (GLN1) (Daucus carota (Wild carrot)).